The chain runs to 125 residues: Small ribosomal subunit protein bS6 (125 aa).

The disordered stretch occupies residues 96–125 (ETGASSMMKTVEREEARKASQAEFAAANER). Over residues 105–115 (TVEREEARKAS) the composition is skewed to basic and acidic residues.

It belongs to the bacterial ribosomal protein bS6 family.

In terms of biological role, binds together with bS18 to 16S ribosomal RNA. This chain is Small ribosomal subunit protein bS6, found in Paracidovorax citrulli (strain AAC00-1) (Acidovorax citrulli).